We begin with the raw amino-acid sequence, 487 residues long: Solute carrier family 22 member 15-like (487 aa).

The helical transmembrane segment at 23-43 (FLTLLQIYVACQSMLIVLVGA) threads the bilayer. Asn-70 carries an N-linked (GlcNAc...) asparagine glycan. A run of 11 helical transmembrane segments spans residues 90-110 (LASSLFFAGLLIGNVFFGPLS), 117-137 (PVYLSGLFFDIIFGYFTALAP), 141-161 (VFAVSRFFVGVMNGGMALVSF), 178-198 (SLTNLIFAVGIAFYALLGFYI), 203-223 (TLAFVANSPGIFFLLLSFVLP), 286-306 (ILLMYIWYVCSLVYYGLTLNA), 315-335 (LNVALYGLVEVPAFPLCLYFI), 345-365 (ATAGFLVFAGFACIFTIFVPE), 374-394 (TVLALFGKLSVSAAFNVVYIY), 408-428 (LGVCAMACRFGGILSPFIPAM), and 435-455 (MPFVAFGISGISAGILSLLLP).

The protein belongs to the major facilitator (TC 2.A.1) superfamily. Organic cation transporter (TC 2.A.1.19) family.

It is found in the membrane. Functionally, probably transports organic cations. The sequence is that of Solute carrier family 22 member 15-like (slc22a15b) from Xenopus laevis (African clawed frog).